The chain runs to 867 residues: KH domain-containing protein akap-1 (867 aa).

The helical transmembrane segment at 108–128 (HALLIALGGFSIAALFVWYIN) threads the bilayer. Disordered regions lie at residues 145-458 (SNGL…QKRV) and 481-523 (HENA…GLTT). Residues 152–162 (ATASDVQTENG) are compositionally biased toward polar residues. Composition is skewed to basic and acidic residues over residues 186-211 (QQKD…DKKQ), 218-239 (TEKK…DHVA), 247-275 (SEHK…EIEV), and 298-307 (QFVKKEEPKL). Residues 336–345 (TKMNDATSPL) are compositionally biased toward polar residues. Residues 363–383 (EMEKSFNEEEFRLNESSDIDR) show a composition bias toward basic and acidic residues. Over residues 397 to 408 (NKNRSSQKRKGG) the composition is skewed to basic residues. Basic and acidic residues-rich tracts occupy residues 441 to 458 (LTKE…QKRV) and 481 to 490 (HENASYEKSD). Over residues 494–507 (LDSQNSEASSQDSG) the composition is skewed to polar residues. The KH domain maps to 528–595 (LPMYEFEIPN…DEINHCLQML (68 aa)). A Tudor domain is found at 689-747 (PCQNGLLCAAPVGNAWFRAVTVQYFDETDEVFVKFVDYGGYSKMARQDLRQIRTDLMSL).

Its subcellular location is the membrane. This is KH domain-containing protein akap-1 from Caenorhabditis elegans.